The following is a 924-amino-acid chain: DNA repair and recombination protein RDH54 (924 aa).

A compositionally biased stretch (basic and acidic residues) spans 1-10 (MQIPKYENKP). Disordered stretches follow at residues 1-21 (MQIP…GSNK) and 155-183 (EALS…NDGG). Residues 168-178 (TTSTTETVPST) show a composition bias toward low complexity. The Helicase ATP-binding domain maps to 299–487 (LENDSDISGC…FTIIDFINPG (189 aa)). Residue 346 to 353 (IPLTGLCK) coordinates ATP. The DEGH box signature appears at 472–475 (NDLN). Residue Lys615 forms a Glycyl lysine isopeptide (Lys-Gly) (interchain with G-Cter in ubiquitin) linkage. A Helicase C-terminal domain is found at 631 to 790 (KLKVLMTLLE…DSEMRNKESS (160 aa)).

Belongs to the SNF2/RAD54 helicase family. As to quaternary structure, interacts with RAD51 and DMC1.

It is found in the nucleus. The enzyme catalyses ATP + H2O = ADP + phosphate + H(+). Its function is as follows. Involved in the recombinational repair of double-strand breaks (DSB) in DNA during mitosis and meiosis. Has DNA dependent ATPase activity. Promotes D-loop (displacement loop) formation with RAD51 recombinase. Modifies the topology of double-stranded DNA during the D-loop reaction to facilitate the invasion of the homologous duplex molecule by the initiating single-stranded DNA substrate. Required for adaptation from G2/M checkpoint arrest induced by a double strand break, by participating in monitoring the extent of single-stranded DNA produced by resection of DNA ends. This role is distinct from its roles in recombination. Promotes colocalization of RAD51 and DMC1 during meiotic recombination. Involved in crossover interference. In Saccharomyces cerevisiae (strain JAY291) (Baker's yeast), this protein is DNA repair and recombination protein RDH54 (RDH54).